The following is a 917-amino-acid chain: Alanine--tRNA ligase (917 aa).

Zn(2+)-binding residues include histidine 615, histidine 619, cysteine 719, and histidine 723.

This sequence belongs to the class-II aminoacyl-tRNA synthetase family. Zn(2+) serves as cofactor.

It localises to the cytoplasm. It carries out the reaction tRNA(Ala) + L-alanine + ATP = L-alanyl-tRNA(Ala) + AMP + diphosphate. In terms of biological role, catalyzes the attachment of alanine to tRNA(Ala) in a two-step reaction: alanine is first activated by ATP to form Ala-AMP and then transferred to the acceptor end of tRNA(Ala). Also edits incorrectly charged Ser-tRNA(Ala) and Gly-tRNA(Ala) via its editing domain. This Thermococcus kodakarensis (strain ATCC BAA-918 / JCM 12380 / KOD1) (Pyrococcus kodakaraensis (strain KOD1)) protein is Alanine--tRNA ligase.